A 171-amino-acid polypeptide reads, in one-letter code: Co-chaperone protein HscB (171 aa).

Residues 2–74 enclose the J domain; the sequence is DYFTLFGLPA…LMRAEYLLSL (73 aa).

This sequence belongs to the HscB family. In terms of assembly, interacts with HscA and stimulates its ATPase activity. Interacts with IscU.

Functionally, co-chaperone involved in the maturation of iron-sulfur cluster-containing proteins. Seems to help targeting proteins to be folded toward HscA. The polypeptide is Co-chaperone protein HscB (Shigella flexneri serotype 5b (strain 8401)).